The chain runs to 163 residues: NADH-quinone oxidoreductase subunit I 1 (163 aa).

2 consecutive 4Fe-4S ferredoxin-type domains span residues 53 to 83 (LRRY…IEAG) and 94 to 123 (VRYD…EGPN). Cysteine 63, cysteine 66, cysteine 69, cysteine 73, cysteine 103, cysteine 106, cysteine 109, and cysteine 113 together coordinate [4Fe-4S] cluster.

Belongs to the complex I 23 kDa subunit family. In terms of assembly, NDH-1 is composed of 14 different subunits. Subunits NuoA, H, J, K, L, M, N constitute the membrane sector of the complex. Requires [4Fe-4S] cluster as cofactor.

Its subcellular location is the cell inner membrane. It catalyses the reaction a quinone + NADH + 5 H(+)(in) = a quinol + NAD(+) + 4 H(+)(out). In terms of biological role, NDH-1 shuttles electrons from NADH, via FMN and iron-sulfur (Fe-S) centers, to quinones in the respiratory chain. The immediate electron acceptor for the enzyme in this species is believed to be ubiquinone. Couples the redox reaction to proton translocation (for every two electrons transferred, four hydrogen ions are translocated across the cytoplasmic membrane), and thus conserves the redox energy in a proton gradient. In Rhizobium etli (strain ATCC 51251 / DSM 11541 / JCM 21823 / NBRC 15573 / CFN 42), this protein is NADH-quinone oxidoreductase subunit I 1.